The sequence spans 403 residues: Succinoglycan biosynthesis protein ExoL (403 aa).

Its subcellular location is the cytoplasm. Its pathway is glycan metabolism; exopolysaccharide biosynthesis. In terms of biological role, essential for succinoglycan (EPS I) synthesis and nodule infection. Glycosyltransferase needed for the addition of the third sugar (glucose), catalyzes the formation of a beta-1,4 linkage between the second and third sugars. In Rhizobium meliloti (strain 1021) (Ensifer meliloti), this protein is Succinoglycan biosynthesis protein ExoL (exoL).